A 698-amino-acid polypeptide reads, in one-letter code: Dual trans-enoyl reductase/FAD-dependent monooxygenase tazHJ (698 aa).

NADP(+)-binding positions include 54–57 (STAT), 78–81 (SPRH), Y96, and 279–280 (IA). 3 residues coordinate FAD: E299, G312, and R372. Residue R455 is part of the active site. The FAD site is built by D571 and A584.

In the N-terminal section; belongs to the zinc-containing alcohol dehydrogenase family. It in the C-terminal section; belongs to the paxM FAD-dependent monooxygenase family.

Its pathway is secondary metabolite biosynthesis. Dual trans-enoyl reductase/FAD-dependent monooxygenase; part of the gene cluster that mediates the biosynthesis of azaterrilone A and other azaphilones, a class of fungal metabolites characterized by a highly oxygenated pyrano-quinone bicyclic core and exhibiting a broad range of bioactivities. The first step of the pathway begins with the non-reducing polyketide synthase tazA that assembles one acetyl-CoA starter unit, five malonyl-CoA units, and catalyzes a series of Claisen condensations, methylation, PT-mediated cyclization, and finally releases the first hexaketide precursor through the R-domain. The tazA product then undergoes reduction on its terminal ketone and the following pyran-ring formation by yet undetermined enzyme(s). Dehydration and enoyl reduction, possibly involving the trans-enoyl reductase tazE leads to the next intermediate. TazD is predicted as an acetyltransferase and might catalyze the acetylation steps leading to the synthesis of azaterrilone A. Azaterrilone A is not the final product of the taz pathway and both the highly reducing polyketide synthase tazB and the dual enzyme tazHJ catalyze late steps of the pathway, leading to the production of the 2 final stereoisomers that contain additional polyketide modification whose structures have still to be determined. The sequence is that of Dual trans-enoyl reductase/FAD-dependent monooxygenase tazHJ from Aspergillus terreus (strain NIH 2624 / FGSC A1156).